Consider the following 137-residue polypeptide: Large ribosomal subunit protein uL16 (137 aa).

The protein belongs to the universal ribosomal protein uL16 family. As to quaternary structure, part of the 50S ribosomal subunit.

Functionally, binds 23S rRNA and is also seen to make contacts with the A and possibly P site tRNAs. This Wolbachia sp. subsp. Brugia malayi (strain TRS) protein is Large ribosomal subunit protein uL16.